Here is a 93-residue protein sequence, read N- to C-terminus: Cobalt transport protein CbiN (93 aa).

A run of 2 helical transmembrane segments spans residues 5-25 (LMLLAMVVALVILPFFINHGG) and 63-83 (LLFTLQGSLGAAVIFYILGYC).

Belongs to the CbiN family. In terms of assembly, forms an energy-coupling factor (ECF) transporter complex composed of an ATP-binding protein (A component, CbiO), a transmembrane protein (T component, CbiQ) and 2 possible substrate-capture proteins (S components, CbiM and CbiN) of unknown stoichimetry.

It localises to the cell inner membrane. It participates in cofactor biosynthesis; adenosylcobalamin biosynthesis. Functionally, part of the energy-coupling factor (ECF) transporter complex CbiMNOQ involved in cobalt import. The polypeptide is Cobalt transport protein CbiN (Salmonella gallinarum (strain 287/91 / NCTC 13346)).